We begin with the raw amino-acid sequence, 1383 residues long: DNA-directed RNA polymerase subunit beta (1383 aa).

This sequence belongs to the RNA polymerase beta chain family. The RNAP catalytic core consists of 2 alpha, 1 beta, 1 beta' and 1 omega subunit. When a sigma factor is associated with the core the holoenzyme is formed, which can initiate transcription.

It catalyses the reaction RNA(n) + a ribonucleoside 5'-triphosphate = RNA(n+1) + diphosphate. DNA-dependent RNA polymerase catalyzes the transcription of DNA into RNA using the four ribonucleoside triphosphates as substrates. This chain is DNA-directed RNA polymerase subunit beta, found in Xanthomonas euvesicatoria pv. vesicatoria (strain 85-10) (Xanthomonas campestris pv. vesicatoria).